Reading from the N-terminus, the 852-residue chain is Leucine--tRNA ligase (852 aa).

The short motif at 42-52 (PYPSGKLHMGH) is the 'HIGH' region element. Residues 586 to 606 (NKYVPADQVDPNDPKDPETGE) form a disordered region. Positions 614–618 (KMSKS) match the 'KMSKS' region motif. Lys617 contributes to the ATP binding site.

This sequence belongs to the class-I aminoacyl-tRNA synthetase family.

The protein localises to the cytoplasm. The catalysed reaction is tRNA(Leu) + L-leucine + ATP = L-leucyl-tRNA(Leu) + AMP + diphosphate. The chain is Leucine--tRNA ligase from Picosynechococcus sp. (strain ATCC 27264 / PCC 7002 / PR-6) (Agmenellum quadruplicatum).